Reading from the N-terminus, the 359-residue chain is uncharacterized protein (359 aa).

6 helical membrane-spanning segments follow: residues 4–24 (ELFV…HLFK), 36–56 (FQAV…VFGF), 68–88 (IPIM…ALAM), 94–114 (LLIT…IAAI), 129–149 (HAFY…YFLI), and 155–175 (ELHL…LYII). The GGDEF domain maps to 223 to 357 (FQFALIYMDI…GRNRVCFSEK (135 aa)).

The protein localises to the cell membrane. This is an uncharacterized protein from Bacillus subtilis (strain 168).